A 2254-amino-acid polypeptide reads, in one-letter code: Genome polyprotein (2254 aa).

The 155-residue stretch at 438–592 folds into the SF3 helicase domain; it reads QTTINELAQL…EQWLVDNPGR (155 aa). 464–471 is a binding site for ATP; the sequence is GPPGIGKT. Residue Tyr956 is modified to O-(5'-phospho-RNA)-tyrosine. One can recognise a Peptidase C24 domain in the interval 1041-1196; that stretch reads GDTYDSEGRG…KKLVSRVQTK (156 aa). Catalysis depends on for 3CLpro activity residues His1078, Asp1099, and Cys1163. One can recognise a RdRp catalytic domain in the interval 1434 to 1559; it reads RVLYCLDYSK…GLTPATASIM (126 aa). Residues 1714–1742 form a disordered region; sequence PAPTRSVASNPEGTQNSNESRPVQPAGPM. Positions 1719–1734 are enriched in polar residues; the sequence is SVASNPEGTQNSNESR.

As to quaternary structure, homodimer. Homomultimer. In terms of assembly, interacts with host IEF4E; this interaction plays a role in translation of viral proteins. Post-translationally, specific enzymatic cleavages in vivo yield mature proteins. Pro-Pol is first autocatalytically cleaved, then processes the whole polyprotein. In terms of processing, VPg is uridylylated by the polymerase and is covalently attached to the 5'-end of the polyadenylated genomic and subgenomic RNAs. This uridylylated form acts as a nucleotide-peptide primer for the polymerase.

Its subcellular location is the virion. The protein resides in the host cytoplasm. It catalyses the reaction a ribonucleoside 5'-triphosphate + H2O = a ribonucleoside 5'-diphosphate + phosphate + H(+). The enzyme catalyses RNA(n) + a ribonucleoside 5'-triphosphate = RNA(n+1) + diphosphate. It carries out the reaction Endopeptidase with a preference for cleavage when the P1 position is occupied by Glu-|-Xaa and the P1' position is occupied by Gly-|-Yaa.. Its function is as follows. Together with NTPase and NS4, initiates the formation of the replication complex. Induces the proliferation of the host smooth ER membranes forming long tubular structures. These remodeled membranes probably form the viral factories that contain the replication complex. Functionally, displays NTPase activity, but no helicase activity. Induces the formation of convoluted membranes derived from the host ER. These remodeled membranes probably form the viral factories that contain the replication complex. Together with NS2 and NS4, initiates the formation of the replication complex. Probable key protein responsible for the formation of membrane alterations by the virus. Induces the formation of convoluted membranes derived from the host ER. These remodeled membranes probably form the viral factories that contain the replication complex. Together with NS2 and NTPase, initiates the formation of the replication complex. In terms of biological role, viral genome-linked protein is covalently linked to the 5'-end of the positive-strand, negative-strand genomic RNAs and subgenomic RNA. Acts as a genome-linked replication primer. May recruit ribosome to viral RNA thereby promoting viral proteins translation. Interacts with host translation initiation complex to allow the translation of viral proteins. Its function is as follows. Protease-polymerase p76 processes the polyprotein: Pro-Pol is first released by autocleavage, then all other proteins are cleaved. Cleaves host translation initiation factor eIF4G1, eIF4G2 and PABP1 thereby inducing a shutdown of host protein synthesis. This shutdown may not prevent viral mRNA from being translated since viral Vpg replaces the cap. It is also an RNA-directed RNA polymerase which replicates genomic and antigenomic viral RNA by recognizing specific signals. Also transcribes a subgenomic mRNA by initiating RNA synthesis internally on antigenomic RNA. This sgRNA codes for structural proteins. Catalyzes the covalent attachment VPg with viral RNAs. Functionally, capsid protein self assembles to form an icosahedral capsid with a T=3 symmetry, about 38 nm in diameter, and consisting of 180 capsid proteins. The capsid encapsulate the genomic RNA and VP2 proteins. Attaches virion to target cells, inducing endocytosis of the viral particle. Acidification of the endosome induces conformational change of capsid protein thereby injecting virus genomic RNA into host cytoplasm. The chain is Genome polyprotein from Porcine enteric sapovirus (isolate Swine/United States/Cowden/1980) (Sw/SV/Cowden/1980/US).